Consider the following 511-residue polypeptide: Glutamate/gamma-aminobutyrate antiporter (511 aa).

Residues 1–13 are Cytoplasmic-facing; it reads MATSVQTGKAKQL. Residues 14 to 36 form a helical membrane-spanning segment; it reads TLLGFFAITASMVMAVYEYPTFA. Residues 37–40 lie on the Periplasmic side of the membrane; the sequence is TSGF. A helical transmembrane segment spans residues 41-64; that stretch reads SLVFFLLLGGILWFIPVGLCAAEM. Residues 65–85 are Cytoplasmic-facing; sequence ATVDGWEEGGVFAWVSNTLGP. A helical membrane pass occupies residues 86 to 112; the sequence is RWGFAAISFGYLQIAIGFIPMLYFVLG. The Periplasmic segment spans residues 113–126; the sequence is ALSYILKWPALNED. The helical transmembrane segment at 127-147 threads the bilayer; the sequence is PITKTIAALIILWALALTQFG. Residues 148 to 151 lie on the Cytoplasmic side of the membrane; the sequence is GTKY. The helical transmembrane segment at 152–180 threads the bilayer; the sequence is TARIAKVGFFAGILLPAFILIALAAIYLH. Residues 181-201 are Periplasmic-facing; it reads SGAPVAIEMDSKTFFPDFSKV. Residues 202-225 traverse the membrane as a helical segment; it reads GTLVVFVAFILSYMGVEASATHVN. At 226–229 the chain is on the cytoplasmic side; sequence EMSN. A helical transmembrane segment spans residues 230–259; that stretch reads PGRDYPLAMLLLMVAAICLSSVGGLSIAMV. Residues 260–288 lie on the Periplasmic side of the membrane; sequence IPGNEINLSAGVMQTFTVLMSHVAPEIEW. The chain crosses the membrane as a helical span at residues 289–322; sequence TVRVISALLLLGVLAEIASWIVGPSRGMYVTAQK. Over 323-337 the chain is Cytoplasmic; that stretch reads NLLPAAFAKMNKNGV. A helical membrane pass occupies residues 338–359; it reads PVTLVISQLVITSIALIILTNT. Topologically, residues 360-362 are periplasmic; sequence GGG. The helical transmembrane segment at 363 to 396 threads the bilayer; it reads NNMSFLIALALTVVIYLCAYFMLFIGYIVLVLKH. Topologically, residues 397-409 are cytoplasmic; sequence PDLKRTFNIPGGK. Residues 410–430 form a helical membrane-spanning segment; the sequence is GVKLVVAIVGLLTSIMAFIVS. The Periplasmic portion of the chain corresponds to 431-443; that stretch reads FLPPDNIQGDSTD. The helical transmembrane segment at 444–467 threads the bilayer; sequence MYVELLVVSFLVVLALPFILYAVH. Over 468–511 the chain is Cytoplasmic; that stretch reads DRKGKANTGVTLEPINSQNAPKGHFFLHPRARSPHYIVMNDKKH.

Belongs to the amino acid-polyamine-organocation (APC) superfamily. Glutamate:GABA antiporter (GGA) (TC 2.A.3.7) family. As to quaternary structure, monomer.

The protein resides in the cell inner membrane. The catalysed reaction is 4-aminobutanoate(in) + L-glutamate(out) = 4-aminobutanoate(out) + L-glutamate(in). Shows pH-dependent activity. The Glu/GABA transport activity is robust at pH 4.5 and rapidly decreases with increasing pH, with no detectable activity at pH 6.5 or above. The Glu analog L-trans-pyrrolidine-2,4-dicarboxylic acid (L-PDC) blocks the uptake of glutamate by selective inhibition. Involved in glutaminase-dependent acid resistance. Exchanges extracellular glutamate (Glu) for intracellular gamma-aminobutyric acid (GABA) under acidic conditions. The protonation states of substrates are crucial for transport. Selectively transports Glu with no net charge and GABA with a positive charge. Also efficiently transports glutamine and, to a smaller extent, methionine and leucine. When the extracellular pH drops below 2.5, can import L-glutamine and export either glutamate or GABA. The ability to survive the extremely acidic conditions of the stomach is essential for successful colonization of the host by commensal and pathogenic bacteria. This chain is Glutamate/gamma-aminobutyrate antiporter, found in Escherichia coli (strain K12).